The chain runs to 100 residues: Co-chaperonin GroES (100 aa).

Belongs to the GroES chaperonin family. In terms of assembly, heptamer of 7 subunits arranged in a ring. Interacts with the chaperonin GroEL.

It is found in the cytoplasm. Its function is as follows. Together with the chaperonin GroEL, plays an essential role in assisting protein folding. The GroEL-GroES system forms a nano-cage that allows encapsulation of the non-native substrate proteins and provides a physical environment optimized to promote and accelerate protein folding. GroES binds to the apical surface of the GroEL ring, thereby capping the opening of the GroEL channel. This Mycobacterium leprae (strain Br4923) protein is Co-chaperonin GroES.